A 117-amino-acid chain; its full sequence is Small ribosomal subunit protein bS6 (117 aa).

A disordered region spans residues 92–117; that stretch reads KVDEHPEGPSIQMQKREERDNRRERR. Basic and acidic residues predominate over residues 105-117; sequence QKREERDNRRERR.

This sequence belongs to the bacterial ribosomal protein bS6 family.

Its function is as follows. Binds together with bS18 to 16S ribosomal RNA. The sequence is that of Small ribosomal subunit protein bS6 from Dinoroseobacter shibae (strain DSM 16493 / NCIMB 14021 / DFL 12).